The chain runs to 61 residues: Metallothionein-1A (61 aa).

M1 is modified (N-acetylmethionine). Residues 1-29 (MDPNCSCATGGSCTCTGSCKCKECKCTSC) form a beta region. C5, C7, C13, C15, C19, C21, C24, C26, C29, C33, C34, C36, C37, C41, C44, C48, C50, and C57 together coordinate a divalent metal cation. Positions 30–61 (KKSCCSCCPMSCAKCAQGCICKGASEKCSCCA) are alpha. S58 carries the post-translational modification Phosphoserine. Residues C59 and C60 each contribute to the a divalent metal cation site.

The protein belongs to the metallothionein superfamily. Type 1 family. In terms of assembly, monomer.

In terms of biological role, metallothioneins have a high content of cysteine residues that bind various heavy metals; these proteins are transcriptionally regulated by both heavy metals and glucocorticoids. This chain is Metallothionein-1A (MT1A), found in Homo sapiens (Human).